The following is a 67-amino-acid chain: Large ribosomal subunit protein bL35 (67 aa).

The protein belongs to the bacterial ribosomal protein bL35 family.

This is Large ribosomal subunit protein bL35 from Sinorhizobium medicae (strain WSM419) (Ensifer medicae).